Consider the following 491-residue polypeptide: Aspartyl/glutamyl-tRNA(Asn/Gln) amidotransferase subunit B (491 aa).

It belongs to the GatB/GatE family. GatB subfamily. Heterotrimer of A, B and C subunits.

The enzyme catalyses L-glutamyl-tRNA(Gln) + L-glutamine + ATP + H2O = L-glutaminyl-tRNA(Gln) + L-glutamate + ADP + phosphate + H(+). It catalyses the reaction L-aspartyl-tRNA(Asn) + L-glutamine + ATP + H2O = L-asparaginyl-tRNA(Asn) + L-glutamate + ADP + phosphate + 2 H(+). Allows the formation of correctly charged Asn-tRNA(Asn) or Gln-tRNA(Gln) through the transamidation of misacylated Asp-tRNA(Asn) or Glu-tRNA(Gln) in organisms which lack either or both of asparaginyl-tRNA or glutaminyl-tRNA synthetases. The reaction takes place in the presence of glutamine and ATP through an activated phospho-Asp-tRNA(Asn) or phospho-Glu-tRNA(Gln). The protein is Aspartyl/glutamyl-tRNA(Asn/Gln) amidotransferase subunit B of Burkholderia lata (strain ATCC 17760 / DSM 23089 / LMG 22485 / NCIMB 9086 / R18194 / 383).